The primary structure comprises 206 residues: AT-hook motif nuclear-localized protein 28 (206 aa).

2 disordered regions span residues methionine 1–proline 21 and threonine 160–tyrosine 206. Positions glycine 5–lysine 17 form a DNA-binding region, a.T hook. The segment covering proline 7 to proline 18 has biased composition (basic residues). One can recognise a PPC domain in the interval aspartate 27–glutamate 173.

It localises to the nucleus. In terms of biological role, transcription factor that specifically binds AT-rich DNA sequences related to the nuclear matrix attachment regions (MARs). The protein is AT-hook motif nuclear-localized protein 28 of Arabidopsis thaliana (Mouse-ear cress).